A 420-amino-acid polypeptide reads, in one-letter code: Phosphoglycerate kinase, cytosolic (420 aa).

12 residues coordinate (2R)-3-phosphoglycerate: Val23, Asp24, Phe25, Asn26, Arg39, Ser61, His62, Gly64, Arg65, Arg135, His171, and Arg172. Gly217 and Ala218 together coordinate ADP. A CDP-binding site is contributed by Gly217. AMP is bound by residues Ala218 and Lys219. Ala218 lines the ATP pocket. Ala218 contacts Mg(2+). Lys219 serves as a coordination point for (2R)-3-phosphoglycerate. Asp222 serves as a coordination point for CDP. Asp222 is a Mg(2+) binding site. Residues Lys223 and Gly241 each contribute to the ADP site. Lys223 provides a ligand contact to AMP. Residue Lys223 coordinates ATP. CDP is bound at residue Gly241. AMP is bound by residues Ala242 and Ala314. Ala242 and Ala314 together coordinate ATP. 2 residues coordinate ADP: Ala314 and Asn338. Residues Gly339 and Phe344 each coordinate CDP. ADP contacts are provided by Phe344, Glu345, Glu377, and Ser378. AMP is bound at residue Glu345. ATP-binding residues include Glu345, Glu377, and Ser378. Glu377 is a binding site for Mg(2+).

The protein belongs to the phosphoglycerate kinase family. As to quaternary structure, monomer. It depends on Mg(2+) as a cofactor.

Its subcellular location is the cytoplasm. The enzyme catalyses (2R)-3-phosphoglycerate + ATP = (2R)-3-phospho-glyceroyl phosphate + ADP. It participates in carbohydrate degradation; glycolysis; pyruvate from D-glyceraldehyde 3-phosphate: step 2/5. The polypeptide is Phosphoglycerate kinase, cytosolic (Trypanosoma brucei brucei).